The following is a 108-amino-acid chain: Cell division topological specificity factor (108 aa).

This sequence belongs to the MinE family.

Prevents the cell division inhibition by proteins MinC and MinD at internal division sites while permitting inhibition at polar sites. This ensures cell division at the proper site by restricting the formation of a division septum at the midpoint of the long axis of the cell. The protein is Cell division topological specificity factor of Prochlorococcus marinus (strain MIT 9215).